A 435-amino-acid polypeptide reads, in one-letter code: GTPase Der (435 aa).

EngA-type G domains are found at residues 3–168 and 176–351; these read PLVA…PDET and IKLA…QNRQ. GTP-binding positions include 9 to 16, 56 to 60, 120 to 123, 182 to 189, 229 to 233, and 294 to 297; these read GRPNVGKS, DTGGY, NKVE, DTAGL, and NKWD. In terms of domain architecture, KH-like spans 352 to 435; it reads KKISTSELNR…VPVSFRYRKK (84 aa).

It belongs to the TRAFAC class TrmE-Era-EngA-EngB-Septin-like GTPase superfamily. EngA (Der) GTPase family. In terms of assembly, associates with the 50S ribosomal subunit.

Functionally, GTPase that plays an essential role in the late steps of ribosome biogenesis. The polypeptide is GTPase Der (Chlorobium phaeobacteroides (strain BS1)).